The following is a 179-amino-acid chain: Large ribosomal subunit protein uL10 (179 aa).

It belongs to the universal ribosomal protein uL10 family. In terms of assembly, part of the ribosomal stalk of the 50S ribosomal subunit. The N-terminus interacts with L11 and the large rRNA to form the base of the stalk. The C-terminus forms an elongated spine to which L12 dimers bind in a sequential fashion forming a multimeric L10(L12)X complex.

Forms part of the ribosomal stalk, playing a central role in the interaction of the ribosome with GTP-bound translation factors. The protein is Large ribosomal subunit protein uL10 of Kosmotoga olearia (strain ATCC BAA-1733 / DSM 21960 / TBF 19.5.1).